Here is a 345-residue protein sequence, read N- to C-terminus: Inositol phosphoceramide mannosyltransferase 2 (345 aa).

The helical transmembrane segment at 4–24 (VIYKFAVFAAVNFFLMSSIVL) threads the bilayer. An N-linked (GlcNAc...) asparagine glycan is attached at N55. A helical membrane pass occupies residues 220–240 (YWLPYLTIMLSTGPLSISFLW). N269 carries an N-linked (GlcNAc...) asparagine glycan. The chain crosses the membrane as a helical span at residues 296–316 (LAYVIVAGFCLYFILSYMFFS).

It belongs to the glycosyltransferase 32 family.

The protein localises to the golgi apparatus. Its subcellular location is the cis-Golgi network membrane. It is found in the trans-Golgi network membrane. Its function is as follows. With imt1 and imt3, is required for the synthesis of mannosyl phosphorylinositol ceramide (MIPC). Catalyzes the addition of mannosyl to phosphorylinositol ceramide (IPC). MIPC is essential for cell morphology, cell-surface distribution of ergosterol, localization for plasma-membrane transporters, and lipid-raft-mediated endocytosis of plasma membrane proteins to the vacuole. This Schizosaccharomyces pombe (strain 972 / ATCC 24843) (Fission yeast) protein is Inositol phosphoceramide mannosyltransferase 2.